The primary structure comprises 189 residues: Probable nicotinate-nucleotide adenylyltransferase (189 aa).

It belongs to the NadD family.

It catalyses the reaction nicotinate beta-D-ribonucleotide + ATP + H(+) = deamido-NAD(+) + diphosphate. It participates in cofactor biosynthesis; NAD(+) biosynthesis; deamido-NAD(+) from nicotinate D-ribonucleotide: step 1/1. In terms of biological role, catalyzes the reversible adenylation of nicotinate mononucleotide (NaMN) to nicotinic acid adenine dinucleotide (NaAD). This Bacillus cereus (strain AH187) protein is Probable nicotinate-nucleotide adenylyltransferase.